The primary structure comprises 179 residues: Large ribosomal subunit protein uL6 (179 aa).

This sequence belongs to the universal ribosomal protein uL6 family. As to quaternary structure, part of the 50S ribosomal subunit.

In terms of biological role, this protein binds to the 23S rRNA, and is important in its secondary structure. It is located near the subunit interface in the base of the L7/L12 stalk, and near the tRNA binding site of the peptidyltransferase center. The protein is Large ribosomal subunit protein uL6 of Chlorobium limicola (strain DSM 245 / NBRC 103803 / 6330).